The following is a 137-amino-acid chain: Active regulator of SIRT1 (137 aa).

Citrulline is present on Arg-7. A compositionally biased stretch (low complexity) spans Gly-14 to Gly-24. A disordered region spans residues Gly-14–Ser-58. Ser-84 is modified (phosphoserine). Positions Arg-96–Thr-120 are disordered.

Belongs to the AROS family. As to quaternary structure, part of the small subunit (SSU) processome, composed of more than 70 proteins and the RNA chaperone small nucleolar RNA (snoRNA) U3. Interacts with RPS19; the interaction is direct and mediates the integration of RPS19 in state post-A1. Interacts with SIRT1. Post-translationally, citrullinated by PADI4.

The protein localises to the nucleus. The protein resides in the nucleolus. Its function is as follows. Part of the small subunit (SSU) processome, first precursor of the small eukaryotic ribosomal subunit. During the assembly of the SSU processome in the nucleolus, many ribosome biogenesis factors, an RNA chaperone and ribosomal proteins associate with the nascent pre-rRNA and work in concert to generate RNA folding, modifications, rearrangements and cleavage as well as targeted degradation of pre-ribosomal RNA by the RNA exosome. Acts as a chaperone that specifically mediates the integration of RPS19 in state post-A1. Direct regulator of SIRT1. Enhances SIRT1-mediated deacetylation of p53/TP53, thereby participating in inhibition of p53/TP53-mediated transcriptional activity. The polypeptide is Active regulator of SIRT1 (RPS19BP1) (Bos taurus (Bovine)).